The following is a 596-amino-acid chain: MSLINIHNASLSFSNLQILEKSTFHINKNERVCLIGKNGAGKSTLLKIINKKQDLDEGQIIYKKNTTTAYLEQNNPKNLNISIYDFIALGLKEHEKNKKKHTNEIVKIEKIIELIKLNKNTLLSHLSGGLLRKVALGRVLVREPDILLLDEPTNHLDMKTIKWLETFLKKFSGSILFVSHDRNFIQNVSTRIIDLDRGKLVSWPGDYENFIKLKNESYRIEKIQKQLFDKNLEKEEQWIRKGIKARSTRNEGRVKKLKILQKEQKDYKKIEKINNIEINQSKNYLGKIIFKLDNIDFLVNNKIIIKNFSSIIQHGDKLALIGDNGCGKSTLIKIIIGENKPQKGKIYIGKGLKISYFDQNRSFLNPNKSIIENIDYGKEKILLNSREQHIIRYLKNFLFKPNQLKSLVKTLSGGECNRLLLAQLFLKPSNVLILDEPTNDLDLDTLQLLEKIIIAYKGTVIIVSHDKTFIKNTAKKCWFFEKNGFINTHFSQYDSLKKEKNNFHKEKIQKNKSKINLAIKIKNNFKKELNAILYEIETIELDIKTLQKKVNEPDFFKKTLEEKLPTLKMLAQKERKLGKKILFWEKLEKNIINTKI.

2 ABC transporter domains span residues 1–222 (MSLI…RIEK) and 290–516 (FKLD…SKIN). Residues 36 to 43 (GKNGAGKS) and 322 to 329 (GDNGCGKS) each bind ATP. The tract at residues 519–596 (IKIKNNFKKE…LEKNIINTKI (78 aa)) is C-terminal domain (CTD), binds DNA.

It belongs to the ABC transporter superfamily. ABCF family. Uup subfamily.

It is found in the cytoplasm. It catalyses the reaction ATP + H2O = ADP + phosphate + H(+). In terms of biological role, probably plays a role in ribosome assembly or function. May be involved in resolution of branched DNA intermediates that result from template switching in postreplication gaps. Binds DNA and has ATPase activity. This chain is ATP-binding protein Uup, found in Buchnera aphidicola subsp. Acyrthosiphon pisum (strain APS) (Acyrthosiphon pisum symbiotic bacterium).